A 71-amino-acid polypeptide reads, in one-letter code: Prokaryotic ubiquitin-like protein Pup (71 aa).

Residues 1–18 (MATRDSGGQSQTGRSQQG) show a composition bias toward low complexity. The interval 1-42 (MATRDSGGQSQTGRSQQGEEIEDVTTEASAEAAERHAEITED) is disordered. Positions 27 to 65 (EASAEAAERHAEITEDVDDLLDEIDSVLEENAEEFVRGY) are ARC ATPase binding. Residues 29-60 (SAEAAERHAEITEDVDDLLDEIDSVLEENAEE) adopt a coiled-coil conformation. Glutamate 71 is covalently cross-linked (Isoglutamyl lysine isopeptide (Glu-Lys) (interchain with K-? in acceptor proteins)).

Belongs to the prokaryotic ubiquitin-like protein family. In terms of assembly, strongly interacts with the proteasome-associated ATPase ARC through a hydrophobic interface; the interacting region of Pup lies in its C-terminal half. There is one Pup binding site per ARC hexamer ring.

The protein operates within protein degradation; proteasomal Pup-dependent pathway. Its function is as follows. Protein modifier that is covalently attached to lysine residues of substrate proteins, thereby targeting them for proteasomal degradation. The tagging system is termed pupylation. The chain is Prokaryotic ubiquitin-like protein Pup from Salinispora tropica (strain ATCC BAA-916 / DSM 44818 / JCM 13857 / NBRC 105044 / CNB-440).